A 191-amino-acid chain; its full sequence is Prostaglandin-H2 D-isomerase (191 aa).

Positions 1 to 28 (MATPNRLWMALLLLGVLGVLQTPAPAQA) are cleaved as a signal peptide. Asparagine 51 carries N-linked (GlcNAc...) asparagine glycosylation. The active-site Nucleophile is cysteine 65. Asparagine 78 is a glycosylation site (N-linked (GlcNAc...) asparagine). A disulfide bond links cysteine 89 and cysteine 186.

The protein belongs to the calycin superfamily. Lipocalin family. As to quaternary structure, monomer. In the male reproductive system, expressed in the testis, epididymis and prostate, and secreted into the seminal fluid.

Its subcellular location is the rough endoplasmic reticulum. It localises to the nucleus membrane. It is found in the golgi apparatus. The protein localises to the cytoplasm. The protein resides in the perinuclear region. Its subcellular location is the secreted. It catalyses the reaction prostaglandin H2 = prostaglandin D2. In terms of biological role, catalyzes the conversion of PGH2 to PGD2, a prostaglandin involved in smooth muscle contraction/relaxation and a potent inhibitor of platelet aggregation. Involved in a variety of CNS functions, such as sedation, NREM sleep and PGE2-induced allodynia, and may have an anti-apoptotic role in oligodendrocytes. Binds small non-substrate lipophilic molecules, including biliverdin, bilirubin, retinal, retinoic acid and thyroid hormone, and may act as a scavenger for harmful hydrophobic molecules and as a secretory retinoid and thyroid hormone transporter. Possibly involved in development and maintenance of the blood-brain, blood-retina, blood-aqueous humor and blood-testis barrier. It is likely to play important roles in both maturation and maintenance of the central nervous system and male reproductive system. Involved in PLA2G3-dependent maturation of mast cells. PLA2G3 is secreted by immature mast cells and acts on nearby fibroblasts upstream to PTDGS to synthesize PGD2, which in turn promotes mast cell maturation and degranulation via PTGDR. The chain is Prostaglandin-H2 D-isomerase (PTGDS) from Bos taurus (Bovine).